The following is a 297-amino-acid chain: Protoheme IX farnesyltransferase (297 aa).

Transmembrane regions (helical) follow at residues 15–35 (VVAL…PAPY), 39–59 (GLLV…AAVF), 91–111 (VWGV…VNII), 112–132 (TVVL…LYLK), 139–159 (IVIG…AVSG), 166–186 (ACLL…ALAI), 220–240 (LLLV…YLVI), and 265–285 (AWST…ALLF).

Belongs to the UbiA prenyltransferase family. Protoheme IX farnesyltransferase subfamily.

The protein resides in the cell inner membrane. The catalysed reaction is heme b + (2E,6E)-farnesyl diphosphate + H2O = Fe(II)-heme o + diphosphate. It participates in porphyrin-containing compound metabolism; heme O biosynthesis; heme O from protoheme: step 1/1. Its function is as follows. Converts heme B (protoheme IX) to heme O by substitution of the vinyl group on carbon 2 of heme B porphyrin ring with a hydroxyethyl farnesyl side group. The chain is Protoheme IX farnesyltransferase from Vesicomyosocius okutanii subsp. Calyptogena okutanii (strain HA).